The following is a 311-amino-acid chain: Malate dehydrogenase (311 aa).

NAD(+) contacts are provided by residues 10 to 15 (GAGRVG) and Asp-35. The substrate site is built by Arg-84 and Arg-90. NAD(+)-binding positions include Asn-97 and 120-122 (VTN). Residues Asn-122 and Arg-153 each coordinate substrate. Catalysis depends on His-177, which acts as the Proton acceptor.

The protein belongs to the LDH/MDH superfamily. MDH type 3 family.

It catalyses the reaction (S)-malate + NAD(+) = oxaloacetate + NADH + H(+). Catalyzes the reversible oxidation of malate to oxaloacetate. The polypeptide is Malate dehydrogenase (Nitrosococcus oceani (strain ATCC 19707 / BCRC 17464 / JCM 30415 / NCIMB 11848 / C-107)).